Reading from the N-terminus, the 100-residue chain is Small ribosomal subunit protein uS14 (100 aa).

This sequence belongs to the universal ribosomal protein uS14 family. In terms of assembly, part of the 30S ribosomal subunit. Contacts proteins S3 and S10.

Functionally, binds 16S rRNA, required for the assembly of 30S particles and may also be responsible for determining the conformation of the 16S rRNA at the A site. The protein is Small ribosomal subunit protein uS14 of Synechococcus sp. (strain RCC307).